The following is a 212-amino-acid chain: Pyridoxine/pyridoxamine 5'-phosphate oxidase (212 aa).

Substrate contacts are provided by residues 8 to 11 and lysine 66; that span reads RREY. Residues 61–66, 76–77, arginine 82, lysine 83, and glutamine 105 contribute to the FMN site; these read RIVLLK and FT. Positions 123, 127, and 131 each coordinate substrate. FMN contacts are provided by residues 140 to 141 and tryptophan 185; that span reads QS. Substrate is bound at residue 191–193; that stretch reads RLH. Arginine 195 provides a ligand contact to FMN.

The protein belongs to the pyridoxamine 5'-phosphate oxidase family. Homodimer. The cofactor is FMN.

The catalysed reaction is pyridoxamine 5'-phosphate + O2 + H2O = pyridoxal 5'-phosphate + H2O2 + NH4(+). The enzyme catalyses pyridoxine 5'-phosphate + O2 = pyridoxal 5'-phosphate + H2O2. It participates in cofactor metabolism; pyridoxal 5'-phosphate salvage; pyridoxal 5'-phosphate from pyridoxamine 5'-phosphate: step 1/1. It functions in the pathway cofactor metabolism; pyridoxal 5'-phosphate salvage; pyridoxal 5'-phosphate from pyridoxine 5'-phosphate: step 1/1. In terms of biological role, catalyzes the oxidation of either pyridoxine 5'-phosphate (PNP) or pyridoxamine 5'-phosphate (PMP) into pyridoxal 5'-phosphate (PLP). The sequence is that of Pyridoxine/pyridoxamine 5'-phosphate oxidase from Shewanella oneidensis (strain ATCC 700550 / JCM 31522 / CIP 106686 / LMG 19005 / NCIMB 14063 / MR-1).